A 340-amino-acid chain; its full sequence is Heat-inducible transcription repressor HrcA (340 aa).

The protein belongs to the HrcA family.

In terms of biological role, negative regulator of class I heat shock genes (grpE-dnaK-dnaJ and groELS operons). Prevents heat-shock induction of these operons. The chain is Heat-inducible transcription repressor HrcA from Chromobacterium violaceum (strain ATCC 12472 / DSM 30191 / JCM 1249 / CCUG 213 / NBRC 12614 / NCIMB 9131 / NCTC 9757 / MK).